A 500-amino-acid polypeptide reads, in one-letter code: Polyamine oxidase 1 (500 aa).

Residues 1-28 (MSSSPSFGLLAVAALLLALSLAQHGSLA) form the signal peptide. FAD-binding positions include 42–43 (MS), E63, R71, and 87–88 (NW). E90 provides a ligand contact to substrate. N105 carries an N-linked (GlcNAc...) asparagine glycan. Residue E198 participates in substrate binding. 3 residues coordinate FAD: V265, Y427, and E458. Residue G466 participates in substrate binding. 467-468 (YV) is a binding site for FAD. A disulfide bridge connects residues C485 and C491.

Belongs to the flavin monoamine oxidase family. As to quaternary structure, monomer. The cofactor is FAD.

The protein resides in the secreted. The protein localises to the extracellular space. It is found in the apoplast. Its subcellular location is the cell wall. The enzyme catalyses spermidine + O2 + H2O = 4-aminobutanal + propane-1,3-diamine + H2O2. It catalyses the reaction N(8)-acetylspermidine + O2 + H2O = 4-acetamidobutanal + propane-1,3-diamine + H2O2. It carries out the reaction spermine + O2 + H2O = N-(3-aminopropyl)-4-aminobutanal + propane-1,3-diamine + H2O2. The catalysed reaction is N(1)-acetylspermine + O2 + H2O = N-(3-acetamidopropyl)-4-aminobutanal + propane-1,3-diamine + H2O2. It participates in amine and polyamine degradation; spermine degradation. In terms of biological role, flavoenzyme involved in polyamine back-conversion. Catalyzes the oxidation of the secondary amino group of polyamines, such as spermine, spermidine and their acetyl derivatives. Plays an important role in the regulation of polyamine intracellular concentration. This chain is Polyamine oxidase 1, found in Zea mays (Maize).